The following is a 383-amino-acid chain: Probable purine permease 16 (383 aa).

A run of 10 helical transmembrane segments spans residues 30–50 (ISVFICGFLIFAGDSLVMLLL), 72–92 (WTQALIQNAAFPILIPFFFIL), 113–133 (VLSLYVSLGVLVSVYSKLYAL), 138–158 (VGWGILLSTQLILTSLFSAFI), 166–186 (WIIISIIFTLGADFFGGPAFA), 203–223 (LILIFPTLAFSLSLCLMQLGF), 247–267 (ICVSFIATLICTVGLFASGEF), 297–317 (VWAVGLLGLVLLVSGLFADVV), 322–342 (SPVVALLVVLAFDFMDDEFGW), and 346–363 (GALLGAVLALASYFYSLH).

Belongs to the purine permeases (TC 2.A.7.14) family.

It localises to the membrane. The sequence is that of Probable purine permease 16 (PUP16) from Arabidopsis thaliana (Mouse-ear cress).